A 272-amino-acid polypeptide reads, in one-letter code: Undecaprenyl-diphosphatase (272 aa).

The next 8 membrane-spanning stretches (helical) occupy residues 1-21 (MSYL…FLPI), 38-58 (PGAT…VVFF), 84-104 (VRMG…GYLF), 112-132 (FRSL…LGLA), 145-165 (MTYG…VPGV), 183-203 (PVAA…SGLY), 219-239 (QTAV…AGLM), and 250-270 (FVVY…TGAI).

It belongs to the UppP family.

Its subcellular location is the cell membrane. It carries out the reaction di-trans,octa-cis-undecaprenyl diphosphate + H2O = di-trans,octa-cis-undecaprenyl phosphate + phosphate + H(+). In terms of biological role, catalyzes the dephosphorylation of undecaprenyl diphosphate (UPP). Confers resistance to bacitracin. The protein is Undecaprenyl-diphosphatase of Clavibacter michiganensis subsp. michiganensis (strain NCPPB 382).